The sequence spans 142 residues: Cystatin-8 (142 aa).

The N-terminal stretch at Met-1–Arg-21 is a signal peptide. Asn-27 and Asn-39 each carry an N-linked (GlcNAc...) asparagine glycan. The Secondary area of contact signature appears at Gln-77–Leu-81. 2 cysteine pairs are disulfide-bonded: Cys-95–Cys-105 and Cys-119–Cys-139.

It belongs to the cystatin family. As to expression, proximal caput region of the epididymis. Lower expression in the testis. Within the testis it is localized to the elongating spermatids, whereas within the epididymis it is exclusively synthesized by the proximal caput epithelium.

It is found in the secreted. Its function is as follows. Performs a specialized role during sperm development and maturation. The polypeptide is Cystatin-8 (CST8) (Homo sapiens (Human)).